Reading from the N-terminus, the 445-residue chain is Fasciclin-like arabinogalactan protein 16 (445 aa).

The first 23 residues, 1–23 (MDSSYGATKFLLLLFLTTSIATA), serve as a signal peptide directing secretion. 2 FAS1 domains span residues 35–173 (NSNS…ERLL) and 257–400 (VKDF…DGVL). Asparagine 72 and asparagine 279 each carry an N-linked (GlcNAc...) asparagine glycan.

This sequence belongs to the fasciclin-like AGP family.

The protein resides in the secreted. In terms of biological role, may be a cell surface adhesion protein. This Arabidopsis thaliana (Mouse-ear cress) protein is Fasciclin-like arabinogalactan protein 16 (FLA16).